Here is a 310-residue protein sequence, read N- to C-terminus: Vomeronasal type-1 receptor 93 (310 aa).

At Met1–Glu20 the chain is on the extracellular side. Residues Val21–Gly41 form a helical membrane-spanning segment. At Glu42–Gln59 the chain is on the cytoplasmic side. A helical membrane pass occupies residues Leu60–Trp80. Residues Asp81–Arg93 lie on the Extracellular side of the membrane. Cys85 and Cys172 are oxidised to a cystine. Residues Leu94 to Leu114 form a helical membrane-spanning segment. Over Ser115 to Gly134 the chain is Cytoplasmic. Residues Ala135–Ile155 traverse the membrane as a helical segment. At Ala156–Glu193 the chain is on the extracellular side. Asn159 is a glycosylation site (N-linked (GlcNAc...) asparagine). The helical transmembrane segment at Ala194–His214 threads the bilayer. The Cytoplasmic portion of the chain corresponds to Arg215–Glu238. A helical transmembrane segment spans residues Thr239–Tyr259. Over Ser260 to Thr269 the chain is Extracellular. Residues Phe270–Ile290 traverse the membrane as a helical segment. The Cytoplasmic segment spans residues Phe291–Ile310.

It belongs to the G-protein coupled receptor 1 family. As to expression, expressed in 1-4% of neurons of the vomeronasal organ. Only one pheromone receptor gene may be expressed in a particular neuron. Not expressed in the main olfactory epithelium.

It localises to the cell membrane. In terms of biological role, putative pheromone receptor implicated in the regulation of social as well as reproductive behavior. The polypeptide is Vomeronasal type-1 receptor 93 (Vom1r93) (Rattus norvegicus (Rat)).